Here is a 308-residue protein sequence, read N- to C-terminus: GTP cyclohydrolase MptA (308 aa).

A disordered region spans residues 282–308; it reads NDESIHQHNAHAEREVTLGQLRDELDA.

The protein belongs to the GTP cyclohydrolase IV family. As to quaternary structure, homodimer. It depends on Fe(2+) as a cofactor.

It carries out the reaction GTP + H2O = 7,8-dihydroneopterin 2',3'-cyclic phosphate + formate + diphosphate + H(+). It functions in the pathway cofactor biosynthesis; 5,6,7,8-tetrahydromethanopterin biosynthesis. Converts GTP to 7,8-dihydro-D-neopterin 2',3'-cyclic phosphate, the first intermediate in the biosynthesis of coenzyme methanopterin. Involved in archaeosine (G(+)) and folate biosynthesis. The chain is GTP cyclohydrolase MptA from Haloferax volcanii (strain ATCC 29605 / DSM 3757 / JCM 8879 / NBRC 14742 / NCIMB 2012 / VKM B-1768 / DS2) (Halobacterium volcanii).